A 399-amino-acid polypeptide reads, in one-letter code: Succinate--CoA ligase [ADP-forming] subunit beta (399 aa).

An ATP-grasp domain is found at 9–254 (KAVLAEFGVA…ESEEDPKEIE (246 aa)). ATP is bound by residues Lys-46, 53-55 (GRG), Glu-109, Ala-112, and Glu-117. 2 residues coordinate Mg(2+): Asn-209 and Asp-223. Residues Asn-274 and 331–333 (GIM) contribute to the substrate site.

The protein belongs to the succinate/malate CoA ligase beta subunit family. In terms of assembly, heterotetramer of two alpha and two beta subunits. Mg(2+) serves as cofactor.

The enzyme catalyses succinate + ATP + CoA = succinyl-CoA + ADP + phosphate. The catalysed reaction is GTP + succinate + CoA = succinyl-CoA + GDP + phosphate. The protein operates within carbohydrate metabolism; tricarboxylic acid cycle; succinate from succinyl-CoA (ligase route): step 1/1. Succinyl-CoA synthetase functions in the citric acid cycle (TCA), coupling the hydrolysis of succinyl-CoA to the synthesis of either ATP or GTP and thus represents the only step of substrate-level phosphorylation in the TCA. The beta subunit provides nucleotide specificity of the enzyme and binds the substrate succinate, while the binding sites for coenzyme A and phosphate are found in the alpha subunit. The protein is Succinate--CoA ligase [ADP-forming] subunit beta of Phenylobacterium zucineum (strain HLK1).